Reading from the N-terminus, the 463-residue chain is D(2)-like dopamine receptor (463 aa).

At 1–35 (MDVFTQYAYNDSIFDNGTWSANETTKDETHPYNYY) the chain is on the extracellular side. 3 N-linked (GlcNAc...) asparagine glycosylation sites follow: Asn10, Asn16, and Asn22. Residues 36–58 (AMLLTLLIFVIVFGNVLVCMAVS) form a helical membrane-spanning segment. The Cytoplasmic segment spans residues 59–68 (REKALQTTTN). Residues 69–91 (YLIVSLAVADLLVATLVMPWVVY) form a helical membrane-spanning segment. The Extracellular segment spans residues 92 to 106 (LEVVGEWRFSKIHCD). Cysteines 105 and 183 form a disulfide. Residues 107–128 (IFVTLDVMMCTASILNLCAISI) form a helical membrane-spanning segment. Residues 129 to 149 (DRYTAVAMPMLYNTRYSSRRR) lie on the Cytoplasmic side of the membrane. A helical membrane pass occupies residues 150–170 (VTVMISVVWVLSFAISCPLLF). Topologically, residues 171-189 (GLNNTATRDQSLCFIANPA) are extracellular. A helical transmembrane segment spans residues 190 to 214 (FVVYSSIVSFYVPFIVTLLVYVQIY). Residues 215–392 (VVLRKRRKRV…SQQKEKKATQ (178 aa)) lie on the Cytoplasmic side of the membrane. The disordered stretch occupies residues 295-362 (CGGSHKQPPP…KEAQGNPAPV (68 aa)). Positions 315-329 (PATSHQLLMSTKANA) are enriched in polar residues. The segment covering 341-353 (EGQRTEKNGDPTK) has biased composition (basic and acidic residues). Residues 393–414 (MLAIVLGVFIICWLPFFITHIL) traverse the membrane as a helical segment. At 415–429 (NTHCTRCKVPAEMYN) the chain is on the extracellular side. Cys418 and Cys421 are oxidised to a cystine. A helical membrane pass occupies residues 430-451 (AFTWLGYVNSAVNPIIYTTFNV). Topologically, residues 452–463 (EFRKAFIKILHC) are cytoplasmic.

It belongs to the G-protein coupled receptor 1 family.

It localises to the cell membrane. Its function is as follows. Receptor for dopamine. In Takifugu rubripes (Japanese pufferfish), this protein is D(2)-like dopamine receptor (d215).